A 363-amino-acid polypeptide reads, in one-letter code: G-protein coupled receptor 78 (363 aa).

Topologically, residues 1–7 (MGPGEAL) are extracellular. The chain crosses the membrane as a helical span at residues 8 to 28 (LAGLLVMVLAVALLSNALVLL). Residues 29 to 47 (CCAYSAELRTRASGVLLVN) lie on the Cytoplasmic side of the membrane. Residues 48 to 68 (LSLGHLLLAALDMPFTLLGVM) form a helical membrane-spanning segment. Residues 69-80 (RGRTPSAPGACQ) are Extracellular-facing. Residues Cys-79 and Cys-156 are joined by a disulfide bond. The chain crosses the membrane as a helical span at residues 81 to 101 (VIGFLDTFLASNAALSVAALS). The Cytoplasmic portion of the chain corresponds to 102–122 (ADQWLAVGFPLRYAGRLRPRY). Residues 123–143 (AGLLLGCAWGQSLAFSGAALG) traverse the membrane as a helical segment. The Extracellular segment spans residues 144 to 168 (CSWLGYSSAFASCSLRLPPEPERPR). The chain crosses the membrane as a helical span at residues 169-189 (FAAFTATLHAVGFVLPLAVLC). Topologically, residues 190 to 242 (LTSLQVHRVARRHCQRMDTVTMKALALLADLHPSVRQRCLIQQKRRRHRATRK) are cytoplasmic. A helical membrane pass occupies residues 243–263 (IGIAIATFLICFAPYVMTRLA). Over 264 to 277 (ELVPFVTVNAQWGI) the chain is Extracellular. Residues 278–297 (LSKCLTYSKAVADPFTYSLL) form a helical membrane-spanning segment. Topologically, residues 298 to 363 (RRPFRQVLAG…ENDSCLQQTH (66 aa)) are cytoplasmic. The interval 340–363 (TPRPASTHNGSVDTENDSCLQQTH) is disordered. Positions 343–363 (PASTHNGSVDTENDSCLQQTH) are enriched in polar residues.

It belongs to the G-protein coupled receptor 1 family. As to expression, high level of expression in placenta. Expressed throughout the brain at low level. No expression detected in skeletal muscle, lung, heart, liver, pancreas, or kidney.

It is found in the cell membrane. Functionally, orphan receptor. Displays a significant level of constitutive activity. Its effect is mediated by G(s)-alpha protein that stimulate adenylate cyclase, resulting in an elevation of intracellular cAMP. This is G-protein coupled receptor 78 (GPR78) from Homo sapiens (Human).